A 271-amino-acid polypeptide reads, in one-letter code: MGIVEEAHNLRVVGEGKRGVIVLAHGFGTDQSVWKHLVPHLVADYRVVLFDTMGAGPTNPDYFDFSRYATLEGYALDLLAILQELRVASCIYVGHSVSAVIGAIASISRPDLFSKLVLLSASPRYLNDVDYYGGFEQEDLDELFEAMGSNYKAWCSGFAPLCVGGDMESVAVQEFSRTLFNIRPDIALSVAQTIFQSDVRSLLPLVTVPCHIVQSTKDLAVPVVVSEYLHKHLGGDSIVEVMPSEGHLPQLSSPDIVIPVLLRHIQHDIAV.

Ser-96 serves as the catalytic Nucleophile. Catalysis depends on residues Asp-218 and His-247.

The protein belongs to the AB hydrolase superfamily. As to quaternary structure, component of an intracellular receptor complex involved in the detection of the smoke compound karrikin. As to expression, expressed constitutively in all organs (e.g. roots, stems, leaves, panicles and embryos).

It is found in the nucleus. The protein resides in the cytoplasm. Its function is as follows. May be involved in strigolactone signaling pathway. Essential for plant responses to karrikins, a class of butenolide compounds, structurally similar to strigolactones, released from burning vegetation that stimulate seed germination and enhance seedling photomorphogenesis. Mediates a specific perception of karrikin. Required for the establishment of symbiosis with the arbuscular mycorrhizal fungi (AMF) Rhizophagus irregularis and Gigaspora rosea. Karrikin binding induces a conformational change. This Oryza sativa subsp. japonica (Rice) protein is Probable esterase D14L (D14L).